Consider the following 318-residue polypeptide: MDKKKGILLVALGTPRSCETEDVREYLKEFLGDPLVIQKPRWLWLPILNGIILKVRPQKSAEMYKQIWTDEGSPLMSYTIAQTEQLQGLREDFDVRFAMTYGEPRIDKVIREMKESGVEDITVLPLYPQYSLTTVEPIIQQVKKIDDKINVIRDFHQIESYTDLLAESIREKWQANHYDKLILSYHGIPLSYVTKKKDAYEAQCIETTRLFVEKLGLKEEEYEHTYQSKFGPEKWLEPATIDRIAELPKEDTKKVLICSPAFVADCLETLFELEIENKEVFVENGGETFDFVHPFNDSLEFTKVLSEVIEKNKVEVEV.

Residues H186 and E268 each coordinate Fe(2+).

This sequence belongs to the ferrochelatase family.

Its subcellular location is the cytoplasm. It carries out the reaction Fe-coproporphyrin III + 2 H(+) = coproporphyrin III + Fe(2+). Its pathway is porphyrin-containing compound metabolism; protoheme biosynthesis. Functionally, involved in coproporphyrin-dependent heme b biosynthesis. Catalyzes the insertion of ferrous iron into coproporphyrin III to form Fe-coproporphyrin III. The chain is Coproporphyrin III ferrochelatase from Lactococcus lactis subsp. cremoris (strain MG1363).